The sequence spans 261 residues: MSKQPHILVSNDDGYLAPGLLALVNAVRPLGRITVIAPEQNHSGASNSLTLSRPLSIHRVAGGERDGFFFVNGTPTDCVHVAMTGFLDEKPDLVISGINQGENMGEDTLYSGTVAAAVEGVMFGVPGIAFSQIDRGWNRIEDAAKAAHDVVAQMLVSALARTEGTATLLNVNIPNRPYADLYRWRVTRLGNRHHSQPVVVQDSPRGEKIYWIGAAGEVKEGSEGTDFHAIAEGCISITPMQLDLTHHARLAAMRANGWDRG.

A divalent metal cation is bound by residues Asp12, Asp13, Ser43, and Asn99.

This sequence belongs to the SurE nucleotidase family. A divalent metal cation serves as cofactor.

It is found in the cytoplasm. It catalyses the reaction a ribonucleoside 5'-phosphate + H2O = a ribonucleoside + phosphate. Functionally, nucleotidase that shows phosphatase activity on nucleoside 5'-monophosphates. The sequence is that of 5'-nucleotidase SurE from Polynucleobacter asymbioticus (strain DSM 18221 / CIP 109841 / QLW-P1DMWA-1) (Polynucleobacter necessarius subsp. asymbioticus).